A 187-amino-acid polypeptide reads, in one-letter code: Orotate phosphoribosyltransferase (187 aa).

Residues arginine 98, lysine 99, lysine 102, histidine 104, and glutamate 128–serine 136 each bind 5-phospho-alpha-D-ribose 1-diphosphate. Orotate-binding residues include threonine 132 and arginine 160.

This sequence belongs to the purine/pyrimidine phosphoribosyltransferase family. PyrE subfamily. Homodimer. Mg(2+) is required as a cofactor.

The catalysed reaction is orotidine 5'-phosphate + diphosphate = orotate + 5-phospho-alpha-D-ribose 1-diphosphate. Its pathway is pyrimidine metabolism; UMP biosynthesis via de novo pathway; UMP from orotate: step 1/2. Functionally, catalyzes the transfer of a ribosyl phosphate group from 5-phosphoribose 1-diphosphate to orotate, leading to the formation of orotidine monophosphate (OMP). The chain is Orotate phosphoribosyltransferase from Rhodopseudomonas palustris (strain ATCC BAA-98 / CGA009).